We begin with the raw amino-acid sequence, 348 residues long: 3-isopropylmalate dehydrogenase (348 aa).

NAD(+) is bound at residue 76 to 87 (GPKWTDPNNRPE). Substrate contacts are provided by arginine 94, arginine 104, arginine 132, and aspartate 217. The Mg(2+) site is built by aspartate 217, aspartate 241, and aspartate 245. 275-287 (GSAPDIAGKNVAN) lines the NAD(+) pocket.

This sequence belongs to the isocitrate and isopropylmalate dehydrogenases family. LeuB type 1 subfamily. Homodimer. Mg(2+) serves as cofactor. It depends on Mn(2+) as a cofactor.

The protein localises to the cytoplasm. The enzyme catalyses (2R,3S)-3-isopropylmalate + NAD(+) = 4-methyl-2-oxopentanoate + CO2 + NADH. Its pathway is amino-acid biosynthesis; L-leucine biosynthesis; L-leucine from 3-methyl-2-oxobutanoate: step 3/4. Its function is as follows. Catalyzes the oxidation of 3-carboxy-2-hydroxy-4-methylpentanoate (3-isopropylmalate) to 3-carboxy-4-methyl-2-oxopentanoate. The product decarboxylates to 4-methyl-2 oxopentanoate. This Staphylococcus aureus (strain MW2) protein is 3-isopropylmalate dehydrogenase.